A 344-amino-acid polypeptide reads, in one-letter code: F17d-G fimbrial adhesin (344 aa).

Residues 1–22 form the signal peptide; the sequence is MTNFYKVFLAVFILVCCNISQA. Residues 23–199 form a receptor-binding lectin domain region; it reads AVSFIGSTEN…SLNPFTLNDT (177 aa). A carbohydrate is bound by residues 65 to 66, 110 to 111, and 139 to 142; these read AN, DT, and STQG. A disulfide bridge links cysteine 75 with cysteine 132. Residues 200-344 are fimbrillin-binding domain; it reads VTSCRLLTPS…GISTFTFSYQ (145 aa). Positions 288–308 are disordered; the sequence is LKFGPDSPVKGNENQWQLSTG. Over residues 299–308 the composition is skewed to polar residues; the sequence is NENQWQLSTG.

This sequence belongs to the fimbrial protein family.

The protein resides in the fimbrium. In terms of biological role, essential fimbrial adhesion factor that mediates binding to N-acetylglucosamine-containing receptors in the host intestinal microvilli, leading to colonization of the intestinal tissue, and diarrhea or septicemia. Also confers adhesiveness to laminin and basement membranes. This chain is F17d-G fimbrial adhesin (f17dG), found in Escherichia coli.